The following is a 413-amino-acid chain: Tyrosine--tRNA ligase (413 aa).

Residue Tyr34 coordinates L-tyrosine. Positions 39 to 48 (CTAQSLHVGN) match the 'HIGH' region motif. L-tyrosine contacts are provided by Tyr171 and Gln175. Positions 231-235 (KMGKT) match the 'KMSKS' region motif. Lys234 serves as a coordination point for ATP. An S4 RNA-binding domain is found at 346–411 (IPITELLVTI…GKKCHILVKI (66 aa)).

This sequence belongs to the class-I aminoacyl-tRNA synthetase family. TyrS type 1 subfamily. In terms of assembly, homodimer.

The protein resides in the cytoplasm. It carries out the reaction tRNA(Tyr) + L-tyrosine + ATP = L-tyrosyl-tRNA(Tyr) + AMP + diphosphate + H(+). Catalyzes the attachment of tyrosine to tRNA(Tyr) in a two-step reaction: tyrosine is first activated by ATP to form Tyr-AMP and then transferred to the acceptor end of tRNA(Tyr). This chain is Tyrosine--tRNA ligase, found in Orientia tsutsugamushi (strain Ikeda) (Rickettsia tsutsugamushi).